The following is a 357-amino-acid chain: MLDLYVIKEGKRLRCGYTTGSCAAAAAKAAAIMLETGKVLQFVEIDTPANIPLKLEVHNPSIDPEKASCAIVKDAGDDPDNTDGIEIYAEVRKRQDGQVHIHGGTGIGRIVRKGLFGTVGQAAINPVPLQMIEKEIRAVSDKGYDVTIYAPQGEVIAKKTFNANIGIEGGISIIGTKGIVYPMSEEALIKTIYMEMDMVEQKHGLSNIILVPGNYGEKISDTLGLSEARVKISNYIGDSLLYAYNKGFQSMTLIGHIGKFSKLSIGVFNTHSKVCDGRMEAFIYYLALMGAPRQLIEEVNGAVTAEEGLHICIDAGYGEVIKKMEQGAEQKIRKYIKDENYPVKVIIYSMERGVHMG.

The protein belongs to the CbiD family.

The catalysed reaction is Co-precorrin-5B + S-adenosyl-L-methionine = Co-precorrin-6A + S-adenosyl-L-homocysteine. It functions in the pathway cofactor biosynthesis; adenosylcobalamin biosynthesis; cob(II)yrinate a,c-diamide from sirohydrochlorin (anaerobic route): step 6/10. Functionally, catalyzes the methylation of C-1 in cobalt-precorrin-5B to form cobalt-precorrin-6A. In Alkaliphilus oremlandii (strain OhILAs) (Clostridium oremlandii (strain OhILAs)), this protein is Cobalt-precorrin-5B C(1)-methyltransferase.